Here is a 175-residue protein sequence, read N- to C-terminus: Disulfide bond formation protein B (175 aa).

Over 1 to 13 (MTAFTRFAHSRAS) the chain is Cytoplasmic. Residues 14-30 (WFILTGSAIALEAAALY) form a helical membrane-spanning segment. Over 31–48 (FQYVMKLDPCVMCIYQRL) the chain is Periplasmic. A disulfide bond links Cys-40 and Cys-43. A helical membrane pass occupies residues 49-64 (AVFGILASGLIGMTAP). Residues 65–71 (KFLIVRI) are Cytoplasmic-facing. The helical transmembrane segment at 72-89 (LGAIGWAVSATWGLKLAL) threads the bilayer. Topologically, residues 90-144 (ALVDMQNNPSPFSTCSFLPEFPAWMPLHEWFPSVMLPTGMCTDVPWQFMGVTMAE) are periplasmic. Cys-104 and Cys-130 are oxidised to a cystine. A helical transmembrane segment spans residues 145 to 163 (WMVVAFSGYLVALLLFIVP). At 164–175 (ILSGSNKPSLYK) the chain is on the cytoplasmic side.

It belongs to the DsbB family.

It is found in the cell inner membrane. Its function is as follows. Required for disulfide bond formation in some periplasmic proteins. Acts by oxidizing the DsbA protein. This Shewanella sp. (strain ANA-3) protein is Disulfide bond formation protein B.